The following is a 1456-amino-acid chain: Macrophage mannose receptor 1 (1456 aa).

Residues 1–19 form the signal peptide; that stretch reads MRLLLLLAFISVIPVSVQL. The Extracellular portion of the chain corresponds to 20-1388; it reads LDARQFLIYN…DPQPKGSSKA (1369 aa). One can recognise a Ricin B-type lectin domain in the interval 22-142; that stretch reads ARQFLIYNED…SGLWSRWKVY (121 aa). Intrachain disulfides connect cysteine 35/cysteine 49, cysteine 74/cysteine 91, cysteine 102/cysteine 149, cysteine 168/cysteine 194, cysteine 182/cysteine 209, cysteine 247/cysteine 340, and cysteine 316/cysteine 332. N-linked (GlcNAc...) asparagine glycosylation occurs at asparagine 104. The Fibronectin type-II domain maps to 163-211; the sequence is ANGAVCAFPFKFENKWYADCTSAGRSDGWLWCGTTTDYDKDKLFGFCPL. The C-type lectin 1 domain occupies 225-341; it reads LTGILYQINS…CVQKLGYICK (117 aa). An N-linked (GlcNAc...) asparagine glycan is attached at asparagine 344. C-type lectin domains lie at 369-487, 511-626, 655-778, and 807-923; these read YAGH…YICK, HGFY…FVCK, KTSM…WICQ, and YKDY…FICQ. 2 disulfide bridges follow: cysteine 391-cysteine 486 and cysteine 463-cysteine 478. A glycan (N-linked (GlcNAc...) asparagine) is linked at asparagine 529. Cystine bridges form between cysteine 532/cysteine 625, cysteine 600/cysteine 617, cysteine 680/cysteine 777, cysteine 753/cysteine 769, cysteine 828/cysteine 922, and cysteine 899/cysteine 914. Residues asparagine 926 and asparagine 930 are each glycosylated (N-linked (GlcNAc...) asparagine). 3 C-type lectin domains span residues 951-1079, 1101-1212, and 1240-1355; these read YKNK…YICQ, YGKS…FLCK, and FYGH…FICK. 6 cysteine pairs are disulfide-bonded: cysteine 976–cysteine 1078, cysteine 1051–cysteine 1070, cysteine 1122–cysteine 1211, cysteine 1189–cysteine 1203, cysteine 1262–cysteine 1354, and cysteine 1331–cysteine 1346. Asparagine 1159 is a glycosylation site (N-linked (GlcNAc...) asparagine). Asparagine 1204 carries an N-linked (GlcNAc...) asparagine glycan. The chain crosses the membrane as a helical span at residues 1389-1409; that stretch reads AGVVTVVLLIVIGAGVAAYFF. Topologically, residues 1410–1456 are cytoplasmic; that stretch reads YKKRHALHIPQEATFENTLYFNSNLSPGTSDTKDLMGNIEQNEHAII.

Detected in macrophages.

It is found in the endosome membrane. The protein resides in the cell membrane. Mediates the endocytosis of glycoproteins by macrophages. Binds both sulfated and non-sulfated polysaccharide chains. Acts as phagocytic receptor for bacteria, fungi and other pathogens. The polypeptide is Macrophage mannose receptor 1 (Mrc1) (Mus musculus (Mouse)).